The following is a 256-amino-acid chain: Doublecortin domain-containing protein (256 aa).

The interval 71–103 (NVFERLTDTAYYTGSHRERFDEFGNGRGIAGRE) is partial p25alpha domain. In terms of domain architecture, Doublecortin spans 152–226 (RLMWLYRNGD…AKYLCTSGEP (75 aa)).

The protein resides in the cytoplasm. It localises to the cytoskeleton. In terms of biological role, specifically required in the formation and maintenance of the conoid fibers; the conoid is a component of the cytoskeletal apical complex, which is composed of a left-handed spiral of 14 fibers made from a nontubular tubulin polymer. Promotes the organization, curvature, and stability of the conoid fibers, and probably bridges other conoid components to the tubulin core. The polypeptide is Doublecortin domain-containing protein (Toxoplasma gondii (strain ATCC 50861 / VEG)).